Reading from the N-terminus, the 38-residue chain is Large ribosomal subunit protein bL36A (38 aa).

Belongs to the bacterial ribosomal protein bL36 family.

In Enterobacter sp. (strain 638), this protein is Large ribosomal subunit protein bL36A.